A 596-amino-acid chain; its full sequence is MLTFNDNKAGMNGLDKEKITKVIEENTSASYSSFSKKQQSRIEEKVLEIKNRLQTATREERQKSEILMENLEMKLESSRDLSRDCVCIDMDAYFAAVEMRDNPALRTVPMAVGSSAMLSTSNYLARRFGVRAGMPGFISNKLCPSLTIVPGNYPKYTKVSRQFSQIFMEYDSDVGMMSLDEAFIDLTDYVASNTEKKTFKRHRFGGDCPCWLPRFDENENTLEDLKIEESICPKCEKSRKIYYDHVEFGTGREEAVREIRFRVEQLTGLTCSAGIASNFMLAKICSDLNKPNGQYVLENDKNAIMEFLKDLPIRKVGGIGRVCEAQLKAMDIQTVGDMNLKKNLYPLCFTPLSQESFLRTALGLPGRPSESDPRRKSISVERTFSPTSDFNILLEEHQEICRMLEEDVRKSGIVGGKTVTLKLKLSSFDVLTRSLTPSDVVKSLEDIQKFSLELLEKEKGKEIRLLGVRLSQLIFEEDEKKRSKTITEFWNEKKLQIQNLQGSENVDDDDVIMMDTRPCPICGTDVENRLDVMNCHVDECILKVQNDDGPELICVSVENKSTQKPERPSTKKRKLQEKRPKAKKMVTIDSFWKKSG.

Residues 85–320 (CVCIDMDAYF…LPIRKVGGIG (236 aa)) form the UmuC domain. Asp89 and Asp180 together coordinate Mg(2+). The active site involves Glu181. The segment at 516–545 (TRPCPICGTDVENRLDVMNCHVDECILKVQ) adopts a UBZ4-type zinc-finger fold. Cys519, Cys522, His536, and Cys540 together coordinate Zn(2+). Positions 559–584 (NKSTQKPERPSTKKRKLQEKRPKAKK) are disordered. The segment covering 570–584 (TKKRKLQEKRPKAKK) has biased composition (basic residues).

This sequence belongs to the DNA polymerase type-Y family. It depends on Mg(2+) as a cofactor. Mn(2+) is required as a cofactor.

Its subcellular location is the nucleus. The enzyme catalyses DNA(n) + a 2'-deoxyribonucleoside 5'-triphosphate = DNA(n+1) + diphosphate. In terms of biological role, DNA polymerase specifically involved in DNA repair. Plays an important role in translesion synthesis, where the normal high-fidelity DNA polymerases cannot proceed and DNA synthesis stalls. Depending on the context, it inserts the correct base, but causes frequent base transitions, transversions and frameshifts. Lacks 3'-5' proofreading exonuclease activity. Forms a Schiff base with 5'-deoxyribose phosphate at abasic sites, but does not have lyase activity. The protein is DNA polymerase kappa (polk-1) of Caenorhabditis elegans.